The following is a 188-amino-acid chain: ATP synthase subunit b (188 aa).

A helical membrane pass occupies residues 19–39 (VYVLGATIVSFLVLFLFITYF).

This sequence belongs to the ATPase B chain family. In terms of assembly, F-type ATPases have 2 components, F(1) - the catalytic core - and F(0) - the membrane proton channel. F(1) has five subunits: alpha(3), beta(3), gamma(1), delta(1), epsilon(1). F(0) has three main subunits: a(1), b(2) and c(10-14). The alpha and beta chains form an alternating ring which encloses part of the gamma chain. F(1) is attached to F(0) by a central stalk formed by the gamma and epsilon chains, while a peripheral stalk is formed by the delta and b chains.

It is found in the cell membrane. In terms of biological role, f(1)F(0) ATP synthase produces ATP from ADP in the presence of a proton or sodium gradient. F-type ATPases consist of two structural domains, F(1) containing the extramembraneous catalytic core and F(0) containing the membrane proton channel, linked together by a central stalk and a peripheral stalk. During catalysis, ATP synthesis in the catalytic domain of F(1) is coupled via a rotary mechanism of the central stalk subunits to proton translocation. Functionally, component of the F(0) channel, it forms part of the peripheral stalk, linking F(1) to F(0). The protein is ATP synthase subunit b of Mesomycoplasma hyopneumoniae (strain 7448) (Mycoplasma hyopneumoniae).